The chain runs to 677 residues: Methionine--tRNA ligase (677 aa).

The short motif at 15–25 (PYANGSIHLGH) is the 'HIGH' region element. Residues C146, C149, C159, and C162 each contribute to the Zn(2+) site. The short motif at 333–337 (KMSKS) is the 'KMSKS' region element. K336 is an ATP binding site. Positions 575-677 (DFAKIDLRVA…SGAKPGQQVK (103 aa)) constitute a tRNA-binding domain.

This sequence belongs to the class-I aminoacyl-tRNA synthetase family. MetG type 1 subfamily. Homodimer. Requires Zn(2+) as cofactor.

The protein localises to the cytoplasm. It carries out the reaction tRNA(Met) + L-methionine + ATP = L-methionyl-tRNA(Met) + AMP + diphosphate. Is required not only for elongation of protein synthesis but also for the initiation of all mRNA translation through initiator tRNA(fMet) aminoacylation. The polypeptide is Methionine--tRNA ligase (Cronobacter sakazakii (strain ATCC BAA-894) (Enterobacter sakazakii)).